The chain runs to 339 residues: Ketol-acid reductoisomerase (NADP(+)) (339 aa).

The region spanning 1–182 (MRVYYDRDAD…GGGRAGIIET (182 aa)) is the KARI N-terminal Rossmann domain. Residues 24-27 (YGSQ), R48, S51, S53, and 83-86 (DELQ) each bind NADP(+). Residue H108 is part of the active site. Residue G134 coordinates NADP(+). A KARI C-terminal knotted domain is found at 183 to 328 (TFKEECETDL…EKLREMMPWI (146 aa)). Residues D191, E195, E227, and E231 each coordinate Mg(2+). Residue S252 coordinates substrate.

This sequence belongs to the ketol-acid reductoisomerase family. It depends on Mg(2+) as a cofactor.

It catalyses the reaction (2R)-2,3-dihydroxy-3-methylbutanoate + NADP(+) = (2S)-2-acetolactate + NADPH + H(+). The enzyme catalyses (2R,3R)-2,3-dihydroxy-3-methylpentanoate + NADP(+) = (S)-2-ethyl-2-hydroxy-3-oxobutanoate + NADPH + H(+). The protein operates within amino-acid biosynthesis; L-isoleucine biosynthesis; L-isoleucine from 2-oxobutanoate: step 2/4. Its pathway is amino-acid biosynthesis; L-valine biosynthesis; L-valine from pyruvate: step 2/4. In terms of biological role, involved in the biosynthesis of branched-chain amino acids (BCAA). Catalyzes an alkyl-migration followed by a ketol-acid reduction of (S)-2-acetolactate (S2AL) to yield (R)-2,3-dihydroxy-isovalerate. In the isomerase reaction, S2AL is rearranged via a Mg-dependent methyl migration to produce 3-hydroxy-3-methyl-2-ketobutyrate (HMKB). In the reductase reaction, this 2-ketoacid undergoes a metal-dependent reduction by NADPH to yield (R)-2,3-dihydroxy-isovalerate. The polypeptide is Ketol-acid reductoisomerase (NADP(+)) (Azorhizobium caulinodans (strain ATCC 43989 / DSM 5975 / JCM 20966 / LMG 6465 / NBRC 14845 / NCIMB 13405 / ORS 571)).